Here is a 531-residue protein sequence, read N- to C-terminus: GMP synthase [glutamine-hydrolyzing] (531 aa).

The 194-residue stretch at 20–213 (KILIVDFGSQ…VRKVAGLKGD (194 aa)) folds into the Glutamine amidotransferase type-1 domain. Cys-97 (nucleophile) is an active-site residue. Residues His-187 and Glu-189 contribute to the active site. Positions 214–406 (WTMRAFREEA…LGLPDVFVGR (193 aa)) constitute a GMPS ATP-PPase domain. 241–247 (SGGVDSA) contributes to the ATP binding site.

Homodimer.

The catalysed reaction is XMP + L-glutamine + ATP + H2O = GMP + L-glutamate + AMP + diphosphate + 2 H(+). It participates in purine metabolism; GMP biosynthesis; GMP from XMP (L-Gln route): step 1/1. Functionally, catalyzes the synthesis of GMP from XMP. This chain is GMP synthase [glutamine-hydrolyzing], found in Afipia carboxidovorans (strain ATCC 49405 / DSM 1227 / KCTC 32145 / OM5) (Oligotropha carboxidovorans).